Consider the following 430-residue polypeptide: Glutamate-1-semialdehyde 2,1-aminomutase (430 aa).

An N6-(pyridoxal phosphate)lysine modification is found at Lys267.

The protein belongs to the class-III pyridoxal-phosphate-dependent aminotransferase family. HemL subfamily. Homodimer. The cofactor is pyridoxal 5'-phosphate.

The protein localises to the cytoplasm. The catalysed reaction is (S)-4-amino-5-oxopentanoate = 5-aminolevulinate. It functions in the pathway porphyrin-containing compound metabolism; protoporphyrin-IX biosynthesis; 5-aminolevulinate from L-glutamyl-tRNA(Glu): step 2/2. The chain is Glutamate-1-semialdehyde 2,1-aminomutase from Anaeromyxobacter dehalogenans (strain 2CP-1 / ATCC BAA-258).